The sequence spans 299 residues: Coenzyme PQQ synthesis protein B (299 aa).

Belongs to the PqqB family.

It participates in cofactor biosynthesis; pyrroloquinoline quinone biosynthesis. In terms of biological role, may be involved in the transport of PQQ or its precursor to the periplasm. This Xanthomonas axonopodis pv. citri (strain 306) protein is Coenzyme PQQ synthesis protein B.